The sequence spans 206 residues: Tetrathionate response regulatory protein TtrR (206 aa).

In terms of domain architecture, Response regulatory spans 3-117 (TIHLLDDDTA…PLQAALERAL (115 aa)). Asp-52 bears the 4-aspartylphosphate mark. The HTH luxR-type domain occupies 134–194 (QQLTPKEREL…ELIRRFEKMA (61 aa)). The segment at residues 153-172 (NREIAEAMNIAVRTVEVHRA) is a DNA-binding region (H-T-H motif).

In terms of processing, phosphorylated by TtrS.

It localises to the cytoplasm. In terms of biological role, member of the two-component regulatory system TtrR/TtrS, which is required for synthesis of tetrathionate reductase. Positively regulates transcription of the ttrBCA operon. During mice infection, the ability to use tetrathionate as an electron acceptor is a growth advantage for S.typhimurium over the competing microbiota in the lumen of the inflamed gut. The protein is Tetrathionate response regulatory protein TtrR (ttrR) of Salmonella typhimurium (strain LT2 / SGSC1412 / ATCC 700720).